The chain runs to 726 residues: Probable cyclic nucleotide-gated ion channel 14 (726 aa).

The Cytoplasmic portion of the chain corresponds to 1–86 (MEFKRDNTVR…GDAVLQWNRV (86 aa)). Residues 87-107 (FLFWCLVALYVDPLFFFLSSV) traverse the membrane as a helical segment. The Extracellular portion of the chain corresponds to 108–122 (KRIGRSSCMTTDLKL). Residues 123 to 143 (GIVITFFRTLADLFYVLHIVI) traverse the membrane as a helical segment. Residues 144-177 (KFRTAYVSRTSRVFGRGELVKDPKLIARRYLRSD) lie on the Cytoplasmic side of the membrane. A helical membrane pass occupies residues 178 to 198 (FIVDLIACLPLPQIVSWFILP). Topologically, residues 199–211 (SIRSSHSDHTTNA) are extracellular. The helical transmembrane segment at 212–232 (LVLIVLVQYIPRLYLIFPLSA) threads the bilayer. Topologically, residues 233–252 (EIIKATGVVTTTAWAGAAYN) are cytoplasmic. A helical transmembrane segment spans residues 253 to 273 (LLQYMLASHILGSAWYLLSIE). The Extracellular portion of the chain corresponds to 274–377 (RQATCWKAEC…LSTSTSVLET (104 aa)). Residues 378–398 (MFAILVAIFGLVLFALLIGNM) form a helical membrane-spanning segment. Residues 399-726 (QTYLQSITVR…PDEPDFSVDD (328 aa)) lie on the Cytoplasmic side of the membrane. Residues 481–605 (LFAQ…SKKL) and E552 each bind a nucleoside 3',5'-cyclic phosphate. Residues 597–612 (FRRLHSKKLQHTFRYY) form a calmodulin-binding region. The IQ domain occupies 617–646 (RTWAACFVQVAWRRYKRKKLAKSLSLAESF). The segment at 707–726 (KDVEIPMLPKPDEPDFSVDD) is disordered.

The protein belongs to the cyclic nucleotide-gated cation channel (TC 1.A.1.5) family. Homotetramer or heterotetramer.

The protein localises to the cell membrane. In terms of biological role, probable cyclic nucleotide-gated ion channel. The sequence is that of Probable cyclic nucleotide-gated ion channel 14 (CNGC14) from Arabidopsis thaliana (Mouse-ear cress).